A 331-amino-acid polypeptide reads, in one-letter code: UBX domain-containing protein 2B (331 aa).

Disordered stretches follow at residues 1–26 and 40–65; these read MAEG…SARD and KCKS…QRFY. Residue A2 is modified to N-acetylalanine. S56 carries the post-translational modification Phosphoserine. At T59 the chain carries Phosphothreonine. Residue S66 is modified to Phosphoserine. In terms of domain architecture, SEP spans 141 to 206; the sequence is DVQILLKLWS…MEDHQDQEYI (66 aa). Phosphoserine occurs at positions 231, 234, and 235. In terms of domain architecture, UBX spans 252–329; that stretch reads DSVPTTKIQI…DILNTVLLQQ (78 aa).

This sequence belongs to the NSFL1C family. As to quaternary structure, interacts with VCP. Does not bind ubiquitin.

It localises to the nucleus. It is found in the cytoplasm. The protein localises to the cytosol. The protein resides in the endoplasmic reticulum. Its subcellular location is the golgi apparatus. It localises to the cytoskeleton. It is found in the microtubule organizing center. The protein localises to the centrosome. In terms of biological role, adapter protein required for Golgi and endoplasmic reticulum biogenesis. Involved in Golgi and endoplasmic reticulum maintenance during interphase and in their reassembly at the end of mitosis. The complex formed with VCP has membrane fusion activity; membrane fusion activity requires USO1-GOLGA2 tethering and BET1L. VCPIP1 is also required, but not its deubiquitinating activity. Together with NSFL1C/p47, regulates the centrosomal levels of kinase AURKA/Aurora A during mitotic progression by promoting AURKA removal from centrosomes in prophase. Also, regulates spindle orientation during mitosis. This chain is UBX domain-containing protein 2B (UBXN2B), found in Homo sapiens (Human).